A 344-amino-acid polypeptide reads, in one-letter code: MARPRHQPGGLCLLLLLLCQFMEDRSAQAGNCWLRQAKNGRCQVLYKTELSKEECCSTGRLSTSWTEEDVNDNTLFKWMIFNGGAPNCIPCKETCENVDCGPGKKCRMNKKNKPRCVCAPDCSNITWKGLVCGLDGKTYRNECALLKARCKEQPELQVQYQGKCKKTCRDVFCPGSSTCVVDQTNNAYCVTCNRICPEPTSSEQYLCGNDGVTYPSACHLRKATCLLGRSIGLAYEGKCIKAKSCDDIQCTGGKKCLWDFKVGRGRCSLCGELCPESKSEEPVCASDNATYASECAMKEAACSSGVLLEVKHSGSCNSISEDTEDEEEDEDQDYSFPISSILEW.

A signal peptide spans 1–29 (MARPRHQPGGLCLLLLLLCQFMEDRSAQA). The region spanning 30-103 (GNCWLRQAKN…TCENVDCGPG (74 aa)) is the TB domain. Disulfide bonds link cysteine 32/cysteine 55, cysteine 42/cysteine 88, cysteine 56/cysteine 91, cysteine 95/cysteine 106, cysteine 100/cysteine 116, cysteine 118/cysteine 150, cysteine 122/cysteine 143, cysteine 132/cysteine 164, cysteine 168/cysteine 179, cysteine 173/cysteine 189, cysteine 192/cysteine 225, cysteine 196/cysteine 218, cysteine 207/cysteine 239, cysteine 245/cysteine 256, cysteine 250/cysteine 267, cysteine 270/cysteine 302, cysteine 274/cysteine 295, and cysteine 284/cysteine 316. One can recognise a Follistatin-like 1 domain in the interval 94-117 (TCENVDCGPGKKCRMNKKNKPRCV). A Kazal-like 1 domain is found at 112-166 (NKPRCVCAPDCSNITWKGLVCGLDGKTYRNECALLKARCKEQPELQVQYQGKCKK). N-linked (GlcNAc...) asparagine glycosylation is present at asparagine 124. Residues 167–190 (TCRDVFCPGSSTCVVDQTNNAYCV) form the Follistatin-like 2 domain. Residues 186 to 241 (NAYCVTCNRICPEPTSSEQYLCGNDGVTYPSACHLRKATCLLGRSIGLAYEGKCIK) enclose the Kazal-like 2 domain. Residues 244–268 (SCDDIQCTGGKKCLWDFKVGRGRCS) enclose the Follistatin-like 3 domain. One can recognise a Kazal-like 3 domain in the interval 261 to 318 (KVGRGRCSLCGELCPESKSEEPVCASDNATYASECAMKEAACSSGVLLEVKHSGSCNS). The N-linked (GlcNAc...) asparagine glycan is linked to asparagine 288. The tract at residues 316–344 (CNSISEDTEDEEEDEDQDYSFPISSILEW) is disordered. Acidic residues predominate over residues 321-333 (EDTEDEEEDEDQD).

As to quaternary structure, monomer.

It localises to the secreted. Binds directly to activin and functions as an activin antagonist. Specific inhibitor of the biosynthesis and secretion of pituitary follicle stimulating hormone (FSH). The polypeptide is Follistatin (Bubalus bubalis (Domestic water buffalo)).